Consider the following 204-residue polypeptide: Large ribosomal subunit protein uL4 (204 aa).

Positions 56–79 (VSGTTAKPYGQKRTGRARQGSLRS) are disordered.

It belongs to the universal ribosomal protein uL4 family. As to quaternary structure, part of the 50S ribosomal subunit.

In terms of biological role, one of the primary rRNA binding proteins, this protein initially binds near the 5'-end of the 23S rRNA. It is important during the early stages of 50S assembly. It makes multiple contacts with different domains of the 23S rRNA in the assembled 50S subunit and ribosome. Its function is as follows. Forms part of the polypeptide exit tunnel. The sequence is that of Large ribosomal subunit protein uL4 from Wolbachia pipientis subsp. Culex pipiens (strain wPip).